Consider the following 187-residue polypeptide: uncharacterized protein (187 aa).

The chain crosses the membrane as a helical span at residues 8–28 (ITFFIILLICLICILLLLVVF). The segment at 99–153 (PLENRRDMEAEEENQINEKQEPENAGETGQEEDDGLQKIHTSVTRTPSVVESQKR) is disordered. The span at 137 to 149 (IHTSVTRTPSVVE) shows a compositional bias: polar residues.

It localises to the membrane. This is an uncharacterized protein from Homo sapiens (Human).